Consider the following 204-residue polypeptide: Distal tail protein pb9 (204 aa).

In terms of assembly, homohexamer. Interacts with baseplate tube protein p140 and baseplate hub protein pb3.

Its subcellular location is the virion. Forms the simplified baseplate, together with the p132 collar protein, the baseplate tube protein p140 and baseplate hub protein pb3. This is Distal tail protein pb9 (D16) from Escherichia phage T5 (Enterobacteria phage T5).